Consider the following 476-residue polypeptide: DnaJ protein P58IPK homolog A (476 aa).

A signal peptide spans 1-28 (MVAMARWPWRVLLPLLLLHSSPVFFVFA). TPR repeat units follow at residues 36 to 69 (PSTL…EPNH), 70 to 103 (SEAY…KPGS), 116 to 150 (AQNA…SPDC), 152 to 184 (KAKL…DEDN), 185 to 218 (LDAL…DPEH), 231 to 264 (LVKK…DPDH), 269 to 302 (VHLY…DGEL), and 304 to 336 (DALT…SPQD). Residues 357-423 (DWYKILGISK…DKRVRYDRGE (67 aa)) enclose the J domain.

In terms of assembly, interacts with BIP1.

It localises to the endoplasmic reticulum lumen. In terms of biological role, may play a role in protein folding in the endoplasmic reticulum. The chain is DnaJ protein P58IPK homolog A from Oryza sativa subsp. japonica (Rice).